Reading from the N-terminus, the 92-residue chain is Acylphosphatase (92 aa).

An Acylphosphatase-like domain is found at 5 to 92 (RAHVVVSGKV…GEFSGFKIAF (88 aa)). Catalysis depends on residues Arg-20 and Asn-38.

It belongs to the acylphosphatase family.

The catalysed reaction is an acyl phosphate + H2O = a carboxylate + phosphate + H(+). The sequence is that of Acylphosphatase (acyP) from Pelotomaculum thermopropionicum (strain DSM 13744 / JCM 10971 / SI).